Reading from the N-terminus, the 750-residue chain is Tegument protein UL46 homolog (750 aa).

Disordered stretches follow at residues 437–484, 525–593, 610–669, and 692–750; these read FCCP…SPRT, QRSD…DYMR, YTPY…EVVY, and SASR…VSSL. The segment covering 465–484 has biased composition (polar residues); the sequence is LRSSRQLPTSPPSNIVSPRT. Residues 528–540 show a composition bias toward low complexity; it reads DSSSSDNSTCSST. The span at 541–553 shows a compositional bias: polar residues; that stretch reads ETQYITLPSTPSP. Basic and acidic residues-rich tracts occupy residues 710–727 and 739–750; these read VCRE…DGFI and KHPDQTERVSSL.

Belongs to the herpesviridae HHV-1 VP11/12 protein family.

The protein localises to the virion tegument. Its subcellular location is the host cell membrane. Its function is as follows. Modulates alpha trans-inducing factor-dependent activation of alpha genes. This is Tegument protein UL46 homolog from Equine herpesvirus 1 (strain V592) (EHV-1).